The primary structure comprises 303 residues: UDP-3-O-acyl-N-acetylglucosamine deacetylase (303 aa).

3 residues coordinate Zn(2+): histidine 78, histidine 237, and aspartate 241. Histidine 264 acts as the Proton donor in catalysis.

Belongs to the LpxC family. The cofactor is Zn(2+).

It catalyses the reaction a UDP-3-O-[(3R)-3-hydroxyacyl]-N-acetyl-alpha-D-glucosamine + H2O = a UDP-3-O-[(3R)-3-hydroxyacyl]-alpha-D-glucosamine + acetate. The protein operates within glycolipid biosynthesis; lipid IV(A) biosynthesis; lipid IV(A) from (3R)-3-hydroxytetradecanoyl-[acyl-carrier-protein] and UDP-N-acetyl-alpha-D-glucosamine: step 2/6. Functionally, catalyzes the hydrolysis of UDP-3-O-myristoyl-N-acetylglucosamine to form UDP-3-O-myristoylglucosamine and acetate, the committed step in lipid A biosynthesis. The polypeptide is UDP-3-O-acyl-N-acetylglucosamine deacetylase (Pseudomonas syringae pv. tomato (strain ATCC BAA-871 / DC3000)).